The sequence spans 141 residues: Protein GAT3 (141 aa).

Residues 72–98 (CPQCAVIKTSPQWREGPDGEVTLCNAC) form a GATA-type zinc finger.

This is Protein GAT3 (GAT3) from Saccharomyces cerevisiae (strain ATCC 204508 / S288c) (Baker's yeast).